The chain runs to 444 residues: RING finger and transmembrane domain-containing protein 2 (444 aa).

Residues 1–181 lie on the Extracellular side of the membrane; it reads MWLFTVNQVL…ILLAKLCFQH (181 aa). Disordered regions lie at residues 13–41 and 92–149; these read MQRR…ASVD and PASR…PGTP. The span at 107-121 shows a compositional bias: basic residues; the sequence is YHHRQPHHHFHHGGH. Over residues 131-140 the composition is skewed to basic and acidic residues; sequence GGDHRGHSEE. Residues 182–202 form a helical membrane-spanning segment; the sequence is KLGIAVCIGMASTFAYANSTL. The Cytoplasmic portion of the chain corresponds to 203–214; that stretch reads REQVSLKEKRSV. The chain crosses the membrane as a helical span at residues 215 to 235; sequence LVILWILAFLAGNTLYVLYTF. The Extracellular portion of the chain corresponds to 236–255; that stretch reads SSQQLYNSLIFLKPNLETLD. Residues 256–276 form a helical membrane-spanning segment; the sequence is FFDLLWIVGIADFVLKYITIA. Residues 277–329 lie on the Cytoplasmic side of the membrane; sequence LKCLIVALPKIILAVKSKGKFYLVIEELSQLFRSLVPIQLWYKYIMGDDSSNS. The chain crosses the membrane as a helical span at residues 330–350; that stretch reads YFLGGVLIVLYSLCKSFDICG. The Extracellular portion of the chain corresponds to 351–444; that stretch reads RVGGVRKALK…GATSAHFQVY (94 aa). An RING-type; degenerate zinc finger spans residues 384-422; it reads CAICQAEFREPLILLCQHVFCEECLCLWLDRERTCPLSR.

The protein resides in the membrane. Functionally, E3 ubiquitin-protein ligase that negatively regulates IL3-dependent cellular responses through IL3RA ubiquitination and degradation by the proteasome, having an anti-inflammatory effect. The protein is RING finger and transmembrane domain-containing protein 2 (RNFT2) of Pongo abelii (Sumatran orangutan).